Consider the following 300-residue polypeptide: MSLEIVLITGMSGSGKSVALHALEDAGYYCVDNLPPELLSAFVELEHGRHSNKVAIAMDARSAGGLPHLPGQLERLQRQGVVPHLVFLDATTGTLVRRFSETRRRHPLSQGPVAEGRRALVQDIETERELLGDLREKSHVIDTSHLRSSQLQSYIKELIAAPVGQMTLVFQSFGFKHGLPSDSDYVFDVRMLPNPHYEPQLRPLTGMDAPVAEFLRQQPGVDQMRRDIQQFLESWLDMMASNHRSYVTVAIGCTGGQHRSVFLVEELARHFAPRWPTLCRHRSLDSRPTLKPADLLAHDV.

10–17 (GMSGSGKS) lines the ATP pocket. 59 to 62 (DARS) contacts GTP.

This sequence belongs to the RapZ-like family.

Functionally, displays ATPase and GTPase activities. This Delftia acidovorans (strain DSM 14801 / SPH-1) protein is Nucleotide-binding protein Daci_5422.